A 333-amino-acid polypeptide reads, in one-letter code: Ornithine carbamoyltransferase (333 aa).

Residues 57 to 60 (STRT), Gln-83, Arg-107, and 134 to 137 (HPTQ) contribute to the carbamoyl phosphate site. L-ornithine is bound by residues Asn-168, Asp-232, and 236–237 (SM). Residues 274–275 (CL) and Arg-319 contribute to the carbamoyl phosphate site.

It belongs to the aspartate/ornithine carbamoyltransferase superfamily. OTCase family.

The protein localises to the cytoplasm. The catalysed reaction is carbamoyl phosphate + L-ornithine = L-citrulline + phosphate + H(+). It participates in amino-acid biosynthesis; L-arginine biosynthesis; L-arginine from L-ornithine and carbamoyl phosphate: step 1/3. Reversibly catalyzes the transfer of the carbamoyl group from carbamoyl phosphate (CP) to the N(epsilon) atom of ornithine (ORN) to produce L-citrulline. The protein is Ornithine carbamoyltransferase of Photobacterium profundum (strain SS9).